The following is a 474-amino-acid chain: Trehalose-6-phosphate synthase (474 aa).

Position 10 (Arg-10) interacts with D-glucose 6-phosphate. A UDP-alpha-D-glucose-binding site is contributed by Gly-22–Gly-23. Residues Tyr-77 and Asp-131 each coordinate D-glucose 6-phosphate. Positions 263 and 268 each coordinate UDP-alpha-D-glucose. A D-glucose 6-phosphate-binding site is contributed by Arg-301. Residues Phe-340 and Leu-366–Glu-370 each bind UDP-alpha-D-glucose.

The protein belongs to the glycosyltransferase 20 family. In terms of assembly, homotetramer.

The enzyme catalyses D-glucose 6-phosphate + UDP-alpha-D-glucose = alpha,alpha-trehalose 6-phosphate + UDP + H(+). Its pathway is glycan biosynthesis; trehalose biosynthesis. Functionally, probably involved in the osmoprotection via the biosynthesis of trehalose. Catalyzes the transfer of glucose from UDP-alpha-D-glucose (UDP-Glc) to D-glucose 6-phosphate (Glc-6-P) to form trehalose-6-phosphate. Acts with retention of the anomeric configuration of the UDP-sugar donor. The protein is Trehalose-6-phosphate synthase of Escherichia coli O1:K1 / APEC.